The following is a 599-amino-acid chain: Elongation factor 4 (599 aa).

The 183-residue stretch at 5 to 187 (STIRNFAIIA…AIVHRLPAPV (183 aa)) folds into the tr-type G domain. Residues 17 to 22 (DHGKST) and 134 to 137 (NKAD) contribute to the GTP site.

Belongs to the TRAFAC class translation factor GTPase superfamily. Classic translation factor GTPase family. LepA subfamily.

Its subcellular location is the cell inner membrane. It catalyses the reaction GTP + H2O = GDP + phosphate + H(+). Required for accurate and efficient protein synthesis under certain stress conditions. May act as a fidelity factor of the translation reaction, by catalyzing a one-codon backward translocation of tRNAs on improperly translocated ribosomes. Back-translocation proceeds from a post-translocation (POST) complex to a pre-translocation (PRE) complex, thus giving elongation factor G a second chance to translocate the tRNAs correctly. Binds to ribosomes in a GTP-dependent manner. The chain is Elongation factor 4 from Anaplasma marginale (strain Florida).